A 139-amino-acid polypeptide reads, in one-letter code: Protein Turandot B (139 aa).

An N-terminal signal peptide occupies residues 1-21 (MNFKTALICFALLLIGTLCSA).

It belongs to the Turandot family.

The protein localises to the secreted. In terms of biological role, a humoral factor that may play a role in stress tolerance. The sequence is that of Protein Turandot B from Drosophila simulans (Fruit fly).